The chain runs to 404 residues: Cysteine desulfurase IscS (404 aa).

Pyridoxal 5'-phosphate is bound by residues 75-76, Asn155, Gln183, and 203-205; these read AT and SGH. An N6-(pyridoxal phosphate)lysine modification is found at Lys206. Thr243 provides a ligand contact to pyridoxal 5'-phosphate. The active-site Cysteine persulfide intermediate is Cys328. Cys328 contacts [2Fe-2S] cluster.

This sequence belongs to the class-V pyridoxal-phosphate-dependent aminotransferase family. NifS/IscS subfamily. In terms of assembly, homodimer. Forms a heterotetramer with IscU, interacts with other sulfur acceptors. It depends on pyridoxal 5'-phosphate as a cofactor.

Its subcellular location is the cytoplasm. It carries out the reaction (sulfur carrier)-H + L-cysteine = (sulfur carrier)-SH + L-alanine. The protein operates within cofactor biosynthesis; iron-sulfur cluster biosynthesis. Master enzyme that delivers sulfur to a number of partners involved in Fe-S cluster assembly, tRNA modification or cofactor biosynthesis. Catalyzes the removal of elemental sulfur atoms from cysteine to produce alanine. Functions as a sulfur delivery protein for Fe-S cluster synthesis onto IscU, an Fe-S scaffold assembly protein, as well as other S acceptor proteins. This chain is Cysteine desulfurase IscS, found in Shewanella putrefaciens (strain CN-32 / ATCC BAA-453).